The sequence spans 489 residues: Serine/threonine-protein kinase BSK3 (489 aa).

G2 carries the N-myristoyl glycine lipid modification. Residues 58–324 form the Protein kinase domain; sequence EYIVSEHGEK…ETEVLSHVLM (267 aa). Residues 64 to 72 and K86 contribute to the ATP site; that span reads HGEKAPNVV. D180 (proton acceptor) is an active-site residue. Phosphoserine is present on S212.

Belongs to the protein kinase superfamily. Ser/Thr protein kinase family. In terms of assembly, interacts with BRI1. Post-translationally, phosphorylated by BRI1 upon brassinolide (BL) treatment. Phosphorylated by ASK7/BIN2 and ASK9/BIL2.

The protein resides in the cell membrane. The catalysed reaction is L-seryl-[protein] + ATP = O-phospho-L-seryl-[protein] + ADP + H(+). It carries out the reaction L-threonyl-[protein] + ATP = O-phospho-L-threonyl-[protein] + ADP + H(+). Its function is as follows. Probable serine/threonine kinase that acts as a positive regulator of brassinosteroid (BR) signaling downstream of the receptor kinase BRI1. Mediates signal transduction from BRI1 by functioning as substrate of BRI1. Functions redundantly with BSK4, BSK6, BSK7 and BSK8. This Arabidopsis thaliana (Mouse-ear cress) protein is Serine/threonine-protein kinase BSK3.